The chain runs to 168 residues: MVIELAELKNFAKIFLTGIYENLERIIFGSGRYTSLEMRNAILTGTVKIPKTVIEELCIGCEGCANVCPTKAIEMIPIEPVKITDNYVKDKIPKINPEKCVYCLYCHDFCPVFSVFNEISPIHPRDVGEEYIEIDISKLLQKKIEISEEQINKISSLLSINLRRIIKD.

2 consecutive 4Fe-4S ferredoxin-type domains span residues 48 to 78 and 91 to 122; these read KIPK…MIPI and KIPK…ISPI. Residues Cys58, Cys61, Cys64, Cys68, Cys100, Cys103, Cys106, and Cys110 each contribute to the [4Fe-4S] cluster site.

This is an uncharacterized protein from Methanocaldococcus jannaschii (strain ATCC 43067 / DSM 2661 / JAL-1 / JCM 10045 / NBRC 100440) (Methanococcus jannaschii).